We begin with the raw amino-acid sequence, 229 residues long: Urease accessory protein UreF (229 aa).

It belongs to the UreF family. UreD, UreF and UreG form a complex that acts as a GTP-hydrolysis-dependent molecular chaperone, activating the urease apoprotein by helping to assemble the nickel containing metallocenter of UreC. The UreE protein probably delivers the nickel.

The protein localises to the cytoplasm. Its function is as follows. Required for maturation of urease via the functional incorporation of the urease nickel metallocenter. The chain is Urease accessory protein UreF from Corynebacterium efficiens (strain DSM 44549 / YS-314 / AJ 12310 / JCM 11189 / NBRC 100395).